The primary structure comprises 396 residues: Elongation factor Tu (396 aa).

The region spanning 10–206 (KPHCNIGTIG…EVDAYIPQPE (197 aa)) is the tr-type G domain. The tract at residues 19–26 (GHVDHGKT) is G1. GTP is bound at residue 19 to 26 (GHVDHGKT). Thr26 contributes to the Mg(2+) binding site. The tract at residues 60-64 (GITIS) is G2. Positions 81 to 84 (DCPG) are G3. GTP contacts are provided by residues 81–85 (DCPGH) and 136–139 (NKCD). Positions 136-139 (NKCD) are G4. Residues 174–176 (SAL) are G5.

The protein belongs to the TRAFAC class translation factor GTPase superfamily. Classic translation factor GTPase family. EF-Tu/EF-1A subfamily. Monomer.

The protein resides in the cytoplasm. The catalysed reaction is GTP + H2O = GDP + phosphate + H(+). Functionally, GTP hydrolase that promotes the GTP-dependent binding of aminoacyl-tRNA to the A-site of ribosomes during protein biosynthesis. The sequence is that of Elongation factor Tu from Paramagnetospirillum magneticum (strain ATCC 700264 / AMB-1) (Magnetospirillum magneticum).